A 75-amino-acid chain; its full sequence is Acyl carrier protein (75 aa).

The Carrier domain maps to 1–74; sequence MLDKVKEIIV…DVINYIEANK (74 aa). An O-(pantetheine 4'-phosphoryl)serine modification is found at Ser34.

It belongs to the acyl carrier protein (ACP) family. Post-translationally, 4'-phosphopantetheine is transferred from CoA to a specific serine of apo-ACP by AcpS. This modification is essential for activity because fatty acids are bound in thioester linkage to the sulfhydryl of the prosthetic group.

The protein resides in the cytoplasm. Its pathway is lipid metabolism; fatty acid biosynthesis. Carrier of the growing fatty acid chain in fatty acid biosynthesis. The polypeptide is Acyl carrier protein (Fusobacterium nucleatum subsp. nucleatum (strain ATCC 25586 / DSM 15643 / BCRC 10681 / CIP 101130 / JCM 8532 / KCTC 2640 / LMG 13131 / VPI 4355)).